We begin with the raw amino-acid sequence, 217 residues long: MHRQSIVRLTRQCGGLPLVELPPPYLAPSLHFSLIRSPVQCSSFSSTAVAAGRERDLSKSRGVSAIHRTGPKFRLGVSKYPLPKPVSPDALEKRYPTPDHGLWGFFPKDKSALSTPEYDVAHGRSWSIQELREKSWDDLHSLWWVCVKERNRIATSNLERQRLKAGYGEWEANDRDKVIRVTQKSIKHVLRERWYAWEDAQRLYKNGYRPQDEDNQE.

It belongs to the universal ribosomal protein uL29 family. Component of the mitochondrial large ribosomal subunit. Mature mitochondrial ribosomes consist of a small (37S) and a large (54S) subunit. The 37S subunit contains at least 33 different proteins and 1 molecule of RNA (15S). The 54S subunit contains at least 45 different proteins and 1 molecule of RNA (21S).

It localises to the mitochondrion. The chain is Large ribosomal subunit protein uL29m (mrpl4) from Aspergillus clavatus (strain ATCC 1007 / CBS 513.65 / DSM 816 / NCTC 3887 / NRRL 1 / QM 1276 / 107).